Consider the following 411-residue polypeptide: Potassium channel subfamily K member 3 (411 aa).

The Cytoplasmic segment spans residues 1 to 8; sequence MKRQNVRT. A helical membrane pass occupies residues 9 to 29; that stretch reads LALIVCTFTYLLVGAAVFDAL. Residue asparagine 53 is glycosylated (N-linked (GlcNAc...) asparagine). The pore-forming intramembrane region spans 78–101; it reads WRFAGSFYFAITVITTIGYGHAAP. A helical membrane pass occupies residues 108–128; it reads VFCMFYALLGIPLTLVMFQSL. Topologically, residues 129-158 are cytoplasmic; it reads GERINTFVRYLLHRAKRGLGMRHAEVSMAN. Residues 159–179 traverse the membrane as a helical segment; sequence MVLIGFVSCISTLCIGAAAFS. Positions 184 to 207 form an intramembrane region, pore-forming; the sequence is WTFFQAYYYCFITLTTIGFGDYVA. Residues 223–243 traverse the membrane as a helical segment; that stretch reads FSFVYILTGLTVIGAFLNLVV. Residues 244–411 lie on the Cytoplasmic side of the membrane; that stretch reads LRFMTMNAED…RGLMKRRSSV (168 aa).

Belongs to the two pore domain potassium channel (TC 1.A.1.8) family. In terms of assembly, homodimer. Heterodimer with KCNK1. Heterodimer with KCNK9. In terms of tissue distribution, strongest expression in heart. Moderate expression in lung and brain. Low levels in liver, kidney and skeletal muscle. Expressed in cerebellar granule cells (at protein level).

The protein resides in the cell membrane. The catalysed reaction is K(+)(in) = K(+)(out). The enzyme catalyses Na(+)(in) = Na(+)(out). With respect to regulation, inhibited by extracellular acidification, muscarinic signaling, divalent metal cations Zn(2+) and Ba(2+), isoflurane, bupivacaine and phenytoin. Activated by protein kinase A. Ruthenium red resistant. Functionally, k(+) channel that conducts voltage-dependent outward rectifying currents upon membrane depolarization. Voltage sensing is coupled to K(+) electrochemical gradient in an 'ion flux gating' mode where outward but not inward ion flow opens the gate. Changes ion selectivity and becomes permeable to Na(+) ions in response to extracellular acidification. Protonation of the pH sensor His-98 stabilizes C-type inactivation conformation likely converting the channel from outward K(+)-conducting, to inward Na(+)-conducting to nonconductive state. Homo- and heterodimerizes to form functional channels with distinct regulatory and gating properties. Allows K(+) currents with fast-gating kinetics important for the repolarization and hyperpolarization phases of action potentials. In cerebellar granule cells, heteromeric KCNK3:KCNK9 channel may hyperpolarize the resting membrane potential to limit intrinsic neuronal excitability, but once the action potential threshold is reached, it may support high-frequency action potential firing and increased neuronal excitability. Dispensable for central chemosensory respiration i.e. breathing controlled by brainstem CO2/pH, it rather conducts pH-sensitive currents and controls the firing rate of serotonergic raphe neurons involved in potentiation of the respiratory chemoreflex. Additionally, imparts chemosensitivity to type 1 cells in carotid bodies which respond to a decrease in arterial oxygen pressure or an increase in carbon dioxide pressure or pH to initiate adaptive changes in pulmonary ventilation. In adrenal gland, contributes to the maintenance of a hyperpolarized resting membrane potential of aldosterone-producing cells at zona glomerulosa and limits aldosterone release as part of a regulatory mechanism that controls arterial blood pressure and electrolyte homeostasis. In brown adipocytes, mediates K(+) efflux that counteracts norepinephrine-induced membrane depolarization, limits Ca(2+) efflux and downstream cAMP and PKA signaling, ultimately attenuating lipid oxidation and adaptive thermogenesis. In Rattus norvegicus (Rat), this protein is Potassium channel subfamily K member 3.